Reading from the N-terminus, the 136-residue chain is Phospholipase A2 (136 aa).

Ca(2+)-binding residues include tryptophan 8, glycine 10, and glycine 12. 5 cysteine pairs are disulfide-bonded: cysteine 9–cysteine 31, cysteine 30–cysteine 70, cysteine 37–cysteine 63, cysteine 61–cysteine 95, and cysteine 105–cysteine 115. The N-linked (GlcNAc...) asparagine glycan is linked to asparagine 16. Histidine 34 is an active-site residue. Aspartate 35 contributes to the Ca(2+) binding site. Residue aspartate 64 is part of the active site.

It belongs to the phospholipase A2 family. It depends on Ca(2+) as a cofactor. As to expression, expressed by the venom gland.

Its subcellular location is the secreted. It carries out the reaction a 1,2-diacyl-sn-glycero-3-phosphocholine + H2O = a 1-acyl-sn-glycero-3-phosphocholine + a fatty acid + H(+). PLA2 catalyzes the calcium-dependent hydrolysis of the 2-acyl groups in 3-sn-phosphoglycerides. This is Phospholipase A2 from Bombus pensylvanicus (American bumblebee).